Consider the following 116-residue polypeptide: Large ribosomal subunit protein bL17 (116 aa).

This sequence belongs to the bacterial ribosomal protein bL17 family. As to quaternary structure, part of the 50S ribosomal subunit. Contacts protein L32.

The chain is Large ribosomal subunit protein bL17 from Thermosynechococcus vestitus (strain NIES-2133 / IAM M-273 / BP-1).